Here is a 484-residue protein sequence, read N- to C-terminus: Folate synthesis bifunctional protein (484 aa).

The interval 15–141 (VIALGSNVGN…PFVLAPLVDL (127 aa)) is HPPK. In terms of domain architecture, Pterin-binding spans 202-470 (TYVMGILNLT…NVRDNVDAAR (269 aa)). A DHPS region spans residues 204–484 (VMGILNLTPD…MMTKRFKNVD (281 aa)). Asn-209 contributes to the Mg(2+) binding site. Residues Thr-249, Asp-286, Asn-305, Asp-378, Lys-423, and 458 to 460 (RVH) contribute to the (7,8-dihydropterin-6-yl)methyl diphosphate site.

It in the N-terminal section; belongs to the HPPK family. This sequence in the C-terminal section; belongs to the DHPS family. It depends on Mg(2+) as a cofactor. Expressed exclusively in reproductive tissues.

The protein resides in the cytoplasm. It localises to the cytosol. It carries out the reaction 6-hydroxymethyl-7,8-dihydropterin + ATP = (7,8-dihydropterin-6-yl)methyl diphosphate + AMP + H(+). It catalyses the reaction (7,8-dihydropterin-6-yl)methyl diphosphate + 4-aminobenzoate = 7,8-dihydropteroate + diphosphate. The protein operates within cofactor biosynthesis; tetrahydrofolate biosynthesis; 2-amino-4-hydroxy-6-hydroxymethyl-7,8-dihydropteridine diphosphate from 7,8-dihydroneopterin triphosphate: step 4/4. Its pathway is cofactor biosynthesis; tetrahydrofolate biosynthesis; 7,8-dihydrofolate from 2-amino-4-hydroxy-6-hydroxymethyl-7,8-dihydropteridine diphosphate and 4-aminobenzoate: step 1/2. Inhibited by sulfanilamide. Catalyzes the first two consecutive steps of tetrahydrofolate biosynthesis. Plays a role in seed stress response and survival. The chain is Folate synthesis bifunctional protein from Arabidopsis thaliana (Mouse-ear cress).